The sequence spans 123 residues: Small ribosomal subunit protein uS12 (123 aa).

Residue Asp89 is modified to 3-methylthioaspartic acid. The segment at 104–123 (TAGVKDRKQARSKYGAKRPK) is disordered. Residues 113–123 (ARSKYGAKRPK) are compositionally biased toward basic residues.

This sequence belongs to the universal ribosomal protein uS12 family. In terms of assembly, part of the 30S ribosomal subunit. Contacts proteins S8 and S17. May interact with IF1 in the 30S initiation complex.

With S4 and S5 plays an important role in translational accuracy. Functionally, interacts with and stabilizes bases of the 16S rRNA that are involved in tRNA selection in the A site and with the mRNA backbone. Located at the interface of the 30S and 50S subunits, it traverses the body of the 30S subunit contacting proteins on the other side and probably holding the rRNA structure together. The combined cluster of proteins S8, S12 and S17 appears to hold together the shoulder and platform of the 30S subunit. This is Small ribosomal subunit protein uS12 from Chromobacterium violaceum (strain ATCC 12472 / DSM 30191 / JCM 1249 / CCUG 213 / NBRC 12614 / NCIMB 9131 / NCTC 9757 / MK).